Here is a 947-residue protein sequence, read N- to C-terminus: Protein NLP8 (947 aa).

Disordered stretches follow at residues 114 to 135 (RSSA…ELSG), 509 to 533 (STKK…TTSS), and 550 to 591 (SMFS…EKNV). Basic and acidic residues predominate over residues 126 to 135 (RSSDSDELSG). Composition is skewed to polar residues over residues 522–533 (SDMSNFPQTTSS) and 550–572 (SMFS…TLEQ). Residues 573–587 (DVSKARTPEKKKSTT) are compositionally biased toward basic and acidic residues. The RWP-RK domain occupies 577 to 671 (ARTPEKKKST…LDSVQGVEGG (95 aa)). The stretch at 646–666 (RKINKVNRSLRKIQTVLDSVQ) forms a coiled coil. The segment covering 805 to 815 (SCSISDSSNGS) has biased composition (low complexity). Positions 805-828 (SCSISDSSNGSGAVLRGSSSTSME) are disordered. The 83-residue stretch at 847–929 (TLIVKASYRE…HSVKFLVRDL (83 aa)) folds into the PB1 domain.

The protein resides in the nucleus. In terms of biological role, probable transcription factor. This is Protein NLP8 (NLP8) from Arabidopsis thaliana (Mouse-ear cress).